The chain runs to 333 residues: Protein SEEDLING LETHAL 1, chloroplastic (333 aa).

The transit peptide at 1–55 directs the protein to the chloroplast; that stretch reads MQQEALSFLSSSLPSLHHNFPSLSRLRFNNFPALSFKPNTSSSSSSFFKSPDIPS. Residues 38–67 form a disordered region; it reads PNTSSSSSSFFKSPDIPSLSSTTTTTTTTE.

The protein belongs to the mTERF family. Self-interacts. Associates with the plastid-encoded RNA polymerase (PEP) complex. Interacts directly with PTAC7/PAP12, PTAC12/HMR/PAP5 and PTAC14/PAP7. As to expression, expressed in green aerial tissues such as cotyledons, leaves, flowers and siliques, but not in roots.

Its subcellular location is the plastid. It localises to the chloroplast stroma. The protein localises to the chloroplast nucleoid. Transcription termination factor required for chloroplast gene expression and protein synthesis in chloroplasts. Necessary for chloroplast photosynthetic complexes assembly by modulating the accumulation of photosynthetic proteins. Essential for embryogenesis. The polypeptide is Protein SEEDLING LETHAL 1, chloroplastic (Arabidopsis thaliana (Mouse-ear cress)).